Consider the following 1273-residue polypeptide: Inverted formin-2 (1273 aa).

5 disordered regions span residues 1–30, 346–387, 427–559, 960–999, and 1021–1273; these read MSVKEGAQRKWAALKEKLGPQDSDPTEANL, GRPR…GQQP, LSSS…PLPG, NKDRKEQMAKAERRKQQLAEEEARRPRDEDGKPIRKGPGK, and KTAR…CVIQ. Ser2 bears the N-acetylserine mark. One can recognise a GBD/FH3 domain in the interval 2 to 330; it reads SVKEGAQRKW…RAVLLASDAQ (329 aa). Position 351 is a phosphoserine (Ser351). Low complexity predominate over residues 359 to 382; sequence SVQTNSVQNQGSSSQNTTTPTTKV. Positions 421–564 constitute an FH1 domain; sequence PLPTPPLSSS…PPLPGFSVPS (144 aa). 2 stretches are compositionally biased toward pro residues: residues 433 to 516 and 524 to 558; these read VLPP…PLPS and QPPPPPPPPLPGMCPVPPPPPLPRAGQIPPPPPLP. The region spanning 589 to 979 is the FH2 domain; that stretch reads HRRVNPPTLR…AERRKQQLAE (391 aa). Residues 907–984 adopt a coiled-coil conformation; it reads EASQELDKVF…QQLAEEEARR (78 aa). The region spanning 1007 to 1022 is the WH2 domain; it reads DALLADIRKGFQLRKT. A compositionally biased stretch (polar residues) spans 1047–1059; sequence ATASNPTQGTNHP. Residues 1088–1101 are compositionally biased toward basic and acidic residues; the sequence is SKEEDGPPALERRS. Residues Ser1172 and Ser1174 each carry the phosphoserine modification. A compositionally biased stretch (acidic residues) spans 1195 to 1204; the sequence is GEDEDGEDTA. Phosphothreonine is present on Thr1203. Phosphoserine occurs at positions 1216 and 1218. Residues Thr1223 and Thr1230 each carry the phosphothreonine modification. Basic residues predominate over residues 1242 to 1251; sequence TSKRRKKRPS.

Belongs to the formin homology family. In terms of assembly, interacts with profilin and actin at the FH1 and FH2 domains respectively. Interacts with DAAM2.

Its subcellular location is the cytoplasm. The protein resides in the perinuclear region. Its activity is regulated as follows. Phosphate inhibits both the depolymerization and severing activities. Functionally, severs actin filaments and accelerates their polymerization and depolymerization. This chain is Inverted formin-2 (Inf2), found in Mus musculus (Mouse).